Reading from the N-terminus, the 728-residue chain is MNHSPLKTALAYECFQDQDNSTLALPSDQKMKTGTSGRQRVQEQVMMTVKRQKSKSSQSSTLSHSNRGSMYDGLADNYNNYGTTSRSSYFSKFQAGNGSWGYPIYNGTLKREPDNRRFSSYSQMENWSRHYPRGSCATPGAGSDICFMQKIKASRSEPDLYCDPRGTLRKGTLGSKGHKTTQNRCSFYSTCSGQKAVKKCPVRPPSCTSKQDPVYVPPISCNKDLSFGHSRASSKICSEDIECSGLTIPKAVQYLCSQDEKYQAIGAYYIQHTCFQDESAKQQVYQLGGICKLVDLLRSPNQNVQQAAAGALRNLVFRSTPNKLETRRQNGIREAVSLLRRSGSTEIQKQLTGLLWNLSSTDELKEELVADALPVLTDRVIIPFSGWCDGNSNMSREVVDPEVFFNATGCLRNLSSADAGRQTMRNYSGLIDSLMAYVQNCVAASRCDDKSVENCMCILHNLSYRLDAEVPTRYRQLEYNTRNAYTEKSSTGCFSNRGDKMMNNNYDCPLPEEETNPKGSSWLYHSDAIRTYLNLMGKSKKDATLEACAGALQNLTASKGLMSNGMSQLIGIKEKGLPQIARLLQSGNSDVVRSGASLLSNMSRHPVLHRVMGNQVFPEVTRLLTSHTGNTSNSEDILSSACYTVRNLMTSQPQMAKQYFSNSMLNNVFNLCRNTASSPKAAEAARLLLSDMWASKELQSVLRQQGFDRNMMGNIAGANNLRNFTSRF.

The interval 1 to 235 is required for binding to single stranded DNA; that stretch reads MNHSPLKTAL…SFGHSRASSK (235 aa). Residues 1 to 287 are required for interaction with EIF4A1; the sequence is MNHSPLKTAL…ESAKQQVYQL (287 aa). Ser4 carries the post-translational modification Phosphoserine; by RIPK4. The tract at residues 48 to 69 is disordered; it reads TVKRQKSKSSQSSTLSHSNRGS. Phosphorylation in this region is required for cytoplasmic localization and protein stabilization stretches follow at residues 54 to 69 and 117 to 192; these read SKSS…NRGS and RFSS…STCS. Ser119 is modified (phosphoserine). Position 120 is a phosphoserine; by RIPK4 (Ser120). At Ser122 the chain carries Phosphoserine. Ser143 bears the Phosphoserine; by RIPK4 mark. A required for WNT-mediated nuclear localization region spans residues 161–270; that stretch reads YCDPRGTLRK…KYQAIGAYYI (110 aa). ARM repeat units follow at residues 244–275, 276–317, 318–360, 361–412, 413–443, 505–536, 537–583, 584–629, and 630–694; these read SGLT…HTCF, QDES…NLVF, RSTP…NLSS, TDEL…GCLR, NLSS…NCVA, NYDC…LNLM, GKSK…IARL, LQSG…SHTG, and NTSN…DMWA.

It belongs to the beta-catenin family. Part of a complex that contains DSG3, PKP1, YAP1 and YWHAG; the complex is required for localization of DSG3 and YAP1 to the cell membrane in keratinocytes. Interacts (via N-terminus) with KRT5/CK5, KRT8/CK8 (via rod domain), KRT15/CK15 and KRT18/CK18 (via rod domain) as part of intermediate filaments. Interacts with VIM (via rod domain). Interacts with DSP. Interacts with DES. Interacts with FXR1; the interaction may facilitate the binding of PKP1 to PKP2, PKP3 and DSP mRNA. Interacts (via N-terminus) with EIF4A1; the interaction promotes EIF4A1 recruitment to the cap-dependent translation complex and EIF4A1 ATPase activity. Interacts with TJP1/ZO-1; the interaction facilitates TJP1/ZO-1 localization to the plasma membrane. Interacts (when phosphorylated) with YWHAG; the interaction results in translocation of PKP1 to the cytoplasm and loss of intercellular adhesion in keratinocytes. Post-translationally, phosphorylated by AKT2; required for interaction with YWHAG and subsequent localization away from desmosomes to the cytoplasm. Phosphorylation of Ser-119 by AKT2 promotes PKP1-driven cap-dependent mRNA translation and decreases intercellular adhesion, phosphorylation is promoted by insulin. Phosphorylation by RIPK4 at the N-terminus is required for its role in differentiation of keratinocytes and DSG1 localization at cell junctions. As to expression, expressed in undifferentiated keratinocytes of the epidermis at birth, expression increases as differentiation proceeds (at protein level). Expressed in the cervical loop during early tooth differentiation, expression is then present between ameloblasts, at ameloblast-ameloblast junctions and in the stratum intermedium during pre-secretory and secretory stages of tooth development (at protein level).

It localises to the nucleus. The protein localises to the cytoplasm. Its subcellular location is the perinuclear region. The protein resides in the cell junction. It is found in the desmosome. It localises to the cell membrane. The protein localises to the stress granule. Its function is as follows. A component of desmosome cell-cell junctions which are required for positive regulation of cellular adhesion. Plays a role in desmosome protein expression regulation and localization to the desmosomal plaque, thereby maintaining cell sheet integrity and anchorage of desmosomes to intermediate filaments. Required for localization of DSG3 and YAP1 to the cell membrane in keratinocytes in response to mechanical strain, via the formation of an interaction complex composed of DSG3, YAP1, PKP1 and YWHAG. Positively regulates differentiation of keratinocytes, potentially via promoting localization of DSG1 at desmosome cell junctions. Required for calcium-independent development and maturation of desmosome plaques specifically at lateral cell-cell contacts in differentiating keratinocytes. Plays a role in the maintenance of DSG3 protein abundance, DSG3 clustering and localization of these clusters to the cell membrane in keratinocytes. May also promote keratinocyte proliferation and morphogenesis during postnatal development. Required for tight junction inside-out transepidermal barrier function of the skin, and is thereby involved in neonatal survival possibly via maintenance of hydration levels. Promotes Wnt-mediated proliferation and differentiation of ameloblasts, via facilitating TJP1/ZO-1 localization to tight junctions. Binds single-stranded DNA (ssDNA), and may thereby play a role in sensing DNA damage and promoting cell survival. Positively regulates cap-dependent translation and as a result cell proliferation, via recruitment of EIF4A1 to the initiation complex and promotion of EIF4A1 ATPase activity. Regulates the mRNA stability and protein abundance of desmosome components PKP2, PKP3, DSC2 and DSP, potentially via its interaction with FXR1. In Mus musculus (Mouse), this protein is Plakophilin-1 (Pkp1).